A 142-amino-acid polypeptide reads, in one-letter code: Transcription antitermination protein NusB (142 aa).

Belongs to the NusB family.

In terms of biological role, involved in transcription antitermination. Required for transcription of ribosomal RNA (rRNA) genes. Binds specifically to the boxA antiterminator sequence of the ribosomal RNA (rrn) operons. This chain is Transcription antitermination protein NusB, found in Streptomyces coelicolor (strain ATCC BAA-471 / A3(2) / M145).